A 104-amino-acid polypeptide reads, in one-letter code: Large ribosomal subunit protein uL24 (104 aa).

This sequence belongs to the universal ribosomal protein uL24 family. In terms of assembly, part of the 50S ribosomal subunit.

In terms of biological role, one of two assembly initiator proteins, it binds directly to the 5'-end of the 23S rRNA, where it nucleates assembly of the 50S subunit. Its function is as follows. One of the proteins that surrounds the polypeptide exit tunnel on the outside of the subunit. The sequence is that of Large ribosomal subunit protein uL24 from Shewanella pealeana (strain ATCC 700345 / ANG-SQ1).